Consider the following 381-residue polypeptide: Heme A synthase (381 aa).

5 helical membrane passes run 25-45, 112-132, 138-158, 176-196, and 212-232; these read GAVRAWLYLLAVLVVAMVAVG, LLGRIVGLVFFLPFAWFWWRG, LLLGLLGLGLLGGLQGAIGWI, LALHLTTASLILAGLVWLAAG, and VAGLLPVLVLIQIWLGGLVAG. His277 contributes to the heme binding site. The next 3 helical transmembrane spans lie at 279–299, 307–327, and 329–349; these read LFAYLVVLVALAHAVQAVRMA, AMGVAALTLAQMGLGIVTLLL, and VPLWAGLAHQVFAMAVLIMAT. His337 contacts heme.

Belongs to the COX15/CtaA family. Type 2 subfamily. Interacts with CtaB. It depends on heme b as a cofactor.

Its subcellular location is the cell membrane. It catalyses the reaction Fe(II)-heme o + 2 A + H2O = Fe(II)-heme a + 2 AH2. The protein operates within porphyrin-containing compound metabolism; heme A biosynthesis; heme A from heme O: step 1/1. Its function is as follows. Catalyzes the conversion of heme O to heme A by two successive hydroxylations of the methyl group at C8. The first hydroxylation forms heme I, the second hydroxylation results in an unstable dihydroxymethyl group, which spontaneously dehydrates, resulting in the formyl group of heme A. The sequence is that of Heme A synthase from Methylorubrum populi (strain ATCC BAA-705 / NCIMB 13946 / BJ001) (Methylobacterium populi).